Consider the following 311-residue polypeptide: JNK1/MAPK8-associated membrane protein (311 aa).

Topologically, residues methionine 1 to aspartate 57 are lumenal. Asparagine 22 carries N-linked (GlcNAc...) asparagine glycosylation. A helical transmembrane segment spans residues tryptophan 58–tryptophan 78. Topologically, residues tyrosine 79–alanine 87 are cytoplasmic. A helical transmembrane segment spans residues leucine 88 to valine 108. Topologically, residues serine 109 to alanine 149 are lumenal. Residues valine 150–leucine 170 traverse the membrane as a helical segment. At leucine 171–arginine 188 the chain is on the cytoplasmic side. The chain crosses the membrane as a helical span at residues phenylalanine 189–glycine 209. Glycine 210 is a topological domain (lumenal). A helical membrane pass occupies residues glycine 211 to valine 231. At tyrosine 232–arginine 250 the chain is on the cytoplasmic side. A helical membrane pass occupies residues leucine 251–valine 271. Residues aspartate 272–aspartate 277 lie on the Lumenal side of the membrane. The chain crosses the membrane as a helical span at residues leucine 278–threonine 298. The Cytoplasmic portion of the chain corresponds to glutamate 299–histidine 311.

As to quaternary structure, interacts with RNF5 and MAPK8, but not with MAPK9. Binding to MAPK8 occurs before and after exposure to stress, such as UV irradiation. After exposure to stress, interacts with phosphorylated MAPK8. Competes with DUSP10 for MAPK8 binding. Associates with multiple components of the proteasome and with ERAD regulatory proteins, including AMFR/GP78, CANX, PSMC1, PSMC2, PSMC3/TBP1, PSMC5, PSMC6, PSMD8, SEC61-ALPHA and UFD1. In terms of processing, ubiquitinated by RNF5 via 'Lys-63'-linked ubiquitin linkage in a UBE2N-dependent manner. Ubiquitination decreases association with components of the proteasome and ERAD. As to expression, expressed in numerous tissues, including brain, spleen, thymus, liver, kidney and testis.

The protein localises to the endoplasmic reticulum membrane. Its function is as follows. Regulates the duration of MAPK8 activity in response to various stress stimuli. Facilitates degradation of misfolded endoplasmic reticulum (ER) proteins through the recruitment of components of the proteasome and endoplasmic reticulum-associated degradation (ERAD) system. The chain is JNK1/MAPK8-associated membrane protein (Jkamp) from Mus musculus (Mouse).